Consider the following 292-residue polypeptide: 4-hydroxy-tetrahydrodipicolinate synthase (292 aa).

Residue threonine 45 participates in pyruvate binding. Catalysis depends on tyrosine 133, which acts as the Proton donor/acceptor. Lysine 161 acts as the Schiff-base intermediate with substrate in catalysis. Pyruvate is bound at residue isoleucine 203.

It belongs to the DapA family. As to quaternary structure, homotetramer; dimer of dimers.

It is found in the cytoplasm. It catalyses the reaction L-aspartate 4-semialdehyde + pyruvate = (2S,4S)-4-hydroxy-2,3,4,5-tetrahydrodipicolinate + H2O + H(+). It functions in the pathway amino-acid biosynthesis; L-lysine biosynthesis via DAP pathway; (S)-tetrahydrodipicolinate from L-aspartate: step 3/4. In terms of biological role, catalyzes the condensation of (S)-aspartate-beta-semialdehyde [(S)-ASA] and pyruvate to 4-hydroxy-tetrahydrodipicolinate (HTPA). The sequence is that of 4-hydroxy-tetrahydrodipicolinate synthase from Acidiphilium cryptum (strain JF-5).